The sequence spans 134 residues: Transcription antitermination protein NusB (134 aa).

The protein belongs to the NusB family.

Involved in transcription antitermination. Required for transcription of ribosomal RNA (rRNA) genes. Binds specifically to the boxA antiterminator sequence of the ribosomal RNA (rrn) operons. In Shewanella sp. (strain MR-4), this protein is Transcription antitermination protein NusB.